A 357-amino-acid chain; its full sequence is Dihydroflavonol 4-reductase (357 aa).

NADP(+) contacts are provided by lysine 49 and tyrosine 168.

Belongs to the NAD(P)-dependent epimerase/dehydratase family. Dihydroflavonol-4-reductase subfamily.

It catalyses the reaction a (2R,3S,4S)-leucoanthocyanidin + NADP(+) = a (2R,3R)-dihydroflavonol + NADPH + H(+). It carries out the reaction (2S)-flavan-4-ol + NADP(+) = (2S)-flavanone + NADPH + H(+). It functions in the pathway pigment biosynthesis; anthocyanin biosynthesis. Bifunctional enzyme involved in flavonoid metabolism. The chain is Dihydroflavonol 4-reductase (A1) from Zea mays (Maize).